A 515-amino-acid chain; its full sequence is Histidine ammonia-lyase (515 aa).

A cross-link (5-imidazolinone (Ala-Gly)) is located at residues 146-148 (ASG). At Ser147 the chain carries 2,3-didehydroalanine (Ser).

Belongs to the PAL/histidase family. In terms of processing, contains an active site 4-methylidene-imidazol-5-one (MIO), which is formed autocatalytically by cyclization and dehydration of residues Ala-Ser-Gly.

The protein resides in the cytoplasm. The catalysed reaction is L-histidine = trans-urocanate + NH4(+). The protein operates within amino-acid degradation; L-histidine degradation into L-glutamate; N-formimidoyl-L-glutamate from L-histidine: step 1/3. This Ralstonia nicotianae (strain ATCC BAA-1114 / GMI1000) (Ralstonia solanacearum) protein is Histidine ammonia-lyase (hutH).